The following is a 161-amino-acid chain: Urocortin-3 (161 aa).

Residues 1–21 (MLMPVHFLLLLLLLLGGPRTG) form the signal peptide. The propeptide occupies 22–118 (LPHKFYKAKP…QDTAKSPHRT (97 aa)). The disordered stretch occupies residues 64–118 (SRDASSGEEEEGKEKKTFPISGARGGARGTRYRYVSQAQPRGKPRQDTAKSPHRT). Ile-157 bears the Isoleucine amide mark.

The protein belongs to the sauvagine/corticotropin-releasing factor/urotensin I family. As to quaternary structure, binds with high affinity to CRF receptors 2-alpha and 2-beta.

It localises to the secreted. Functionally, suppresses food intake, delays gastric emptying and decreases heat-induced edema. Might represent an endogenous ligand for maintaining homeostasis after stress. The protein is Urocortin-3 (UCN3) of Homo sapiens (Human).